Consider the following 317-residue polypeptide: Putative HTH-type transcriptional regulatory protein Mlab_0160 (317 aa).

Positions 132-189 (LRTLREEQAMSLGDLAHALGVSRRTISKYEGGMGTTLEMAMRLEEFFNDDIVMPIDLL) constitute an HTH cro/C1-type domain. Positions 143-162 (LGDLAHALGVSRRTISKYEG) form a DNA-binding region, H-T-H motif. Residues 199–219 (VPASLASGHNPESDAQPKRPE) form a disordered region. The segment covering 209 to 219 (PESDAQPKRPE) has biased composition (basic and acidic residues).

The sequence is that of Putative HTH-type transcriptional regulatory protein Mlab_0160 from Methanocorpusculum labreanum (strain ATCC 43576 / DSM 4855 / Z).